Here is a 323-residue protein sequence, read N- to C-terminus: Porphobilinogen deaminase (323 aa).

At Cys-240 the chain carries S-(dipyrrolylmethanemethyl)cysteine.

The protein belongs to the HMBS family. As to quaternary structure, monomer. Dipyrromethane is required as a cofactor.

The catalysed reaction is 4 porphobilinogen + H2O = hydroxymethylbilane + 4 NH4(+). Its pathway is porphyrin-containing compound metabolism; protoporphyrin-IX biosynthesis; coproporphyrinogen-III from 5-aminolevulinate: step 2/4. In terms of biological role, tetrapolymerization of the monopyrrole PBG into the hydroxymethylbilane pre-uroporphyrinogen in several discrete steps. The chain is Porphobilinogen deaminase from Sulfurovum sp. (strain NBC37-1).